We begin with the raw amino-acid sequence, 334 residues long: Ferric enterobactin transport system permease protein FepD (334 aa).

At 1–9 the chain is on the periplasmic side; sequence MSGSVAVTR. The helical transmembrane segment at 10–30 threads the bilayer; that stretch reads AIAVPGLLLLLIIATALSLLI. At 31 to 63 the chain is on the cytoplasmic side; that stretch reads GAKSLPASVVLEAFSGTCQSADCTIVLDARLPR. Residues 64–84 traverse the membrane as a helical segment; that stretch reads TLAGLLAGGALGLAGALMQTL. The Periplasmic segment spans residues 85-92; the sequence is TRNPLADP. The chain crosses the membrane as a helical span at residues 93-113; it reads GLLGVNAGASFAIVLGAALFG. Residues 114–120 lie on the Cytoplasmic side of the membrane; it reads YSSAQEQ. The helical transmembrane segment at 121–141 threads the bilayer; sequence LAMAFAGALVASLIVAFTGSQ. Over 142–151 the chain is Periplasmic; the sequence is GGGQLSPVRL. A helical membrane pass occupies residues 152–172; it reads TLAGVALAAVLEGLTSGIALL. Topologically, residues 173–192 are cytoplasmic; sequence NPDVYDQLRFWQAGSLDIRN. Residues 193-213 traverse the membrane as a helical segment; sequence LHTLKVVLIPVLIAGATALLL. The Periplasmic segment spans residues 214–241; it reads SRALNSLSLGSDTATALGSRVARTQLIG. The helical transmembrane segment at 242-262 threads the bilayer; it reads LLAITVLCGSATAIVGPIAFI. Over 263–279 the chain is Cytoplasmic; it reads GLMMPHMARWLVGADHR. The helical transmembrane segment at 280 to 300 threads the bilayer; it reads WSLPVTLLATPALLLFADIIG. The Periplasmic segment spans residues 301–305; the sequence is RVIVP. The chain crosses the membrane as a helical span at residues 306–326; it reads GELRVSVVSAFIGAPVLIFLV. Residues 327 to 334 are Cytoplasmic-facing; that stretch reads RRKTRGGA.

This sequence belongs to the binding-protein-dependent transport system permease family. FecCD subfamily. In terms of assembly, the complex is composed of two ATP-binding proteins (FepC), two transmembrane proteins (FepD and FepG) and a solute-binding protein (FepB).

The protein localises to the cell inner membrane. Its function is as follows. Part of the ABC transporter complex FepBDGC involved in ferric enterobactin uptake. Responsible for the translocation of the substrate across the membrane. In Escherichia coli (strain K12), this protein is Ferric enterobactin transport system permease protein FepD (fepD).